The sequence spans 273 residues: Cell division protein FtsQ (273 aa).

At 1–20 (MPPRKAHTTRRTPAKKSGVR) the chain is on the cytoplasmic side. A helical membrane pass occupies residues 21–43 (RRLLRLLVTGVPVLALCGVAWLW). Over 44–273 (LESVRLTRIE…STQKSAMGHE (230 aa)) the chain is Periplasmic. The POTRA domain maps to 47 to 115 (VRLTRIEIVG…GTLRIAVEER (69 aa)).

Belongs to the FtsQ/DivIB family. FtsQ subfamily.

The protein localises to the cell inner membrane. Its function is as follows. Essential cell division protein. The sequence is that of Cell division protein FtsQ from Rhodothermus marinus (strain ATCC 43812 / DSM 4252 / R-10) (Rhodothermus obamensis).